The following is a 927-amino-acid chain: Clumping factor A (927 aa).

Positions 1–39 (MNMKKKEKHAIRKKSIGVASVLVGTLIGFGLLSSKEADA) are cleaved as a signal peptide. A YSIRK-G/S signaling motif motif is present at residues 9 to 20 (HAIRKKSIGVAS). Disordered stretches follow at residues 34 to 200 (SKEA…SNKD) and 529 to 898 (FNNG…SEDE). Positions 40–542 (SENSVTQSDS…SGSGDGIDKP (503 aa)) are ligand binding A region. Positions 47 to 65 (SDSASNESKSNDSSSVSAA) are enriched in low complexity. Polar residues predominate over residues 71 to 105 (TNVSDTKTSSNTNNGETSVAQNPAQQETTQSSSTN). 2 stretches are compositionally biased toward low complexity: residues 106-132 (ATTEETPVTGEATTTTTNQANTPATTQ) and 143-162 (NQTSNETTSNDTNTVSSVNS). Residues 163–200 (PQNSTNAENVSTTQDTSTEATPSNNESAPQSTDASNKD) show a composition bias toward polar residues. Over residues 547–565 (QPDEPGEIEPIPEDSDSDP) the composition is skewed to acidic residues. Residues 566–598 (GSDSGSDSNSDSGSDSGSDSTSDSGSDSASDSD) show a composition bias toward low complexity. A compositionally biased stretch (acidic residues) spans 599–855 (SASDSDSASD…DSDSESDSNS (257 aa)). The span at 856–867 (DSESVSNNNVVP) shows a compositional bias: low complexity. Residues 881–890 (NEAKDSKEPL) show a composition bias toward basic and acidic residues. The LPXTG sorting signal signature appears at 890-894 (LPDTG). Threonine 893 bears the Pentaglycyl murein peptidoglycan amidated threonine mark. The propeptide at 894–927 (GSEDEANTSLIWGLLASIGSLLLFRRKKENKDKK) is removed by sortase.

The protein belongs to the serine-aspartate repeat-containing protein (SDr) family.

The protein localises to the secreted. The protein resides in the cell wall. Its function is as follows. Cell surface-associated protein implicated in virulence. Promotes bacterial attachment exclusively to the gamma-chain of human fibrinogen. Induces formation of bacterial clumps, which diminish the ability of group IIA phospholipase A2 to cause bacterial phospholipid hydrolysis and killing. Significantly decreases macrophage phagocytosis possibly thanks to the clumps, clumped bacteria being too large to be phagocytosed. Dominant factor responsible for human platelet aggregation, which may be an important mechanism for initiating infective endocarditis. Enhances spleen cell proliferative response in vitro, contributing significantly to the immunostimulatory activity of S.aureus. In Staphylococcus aureus (strain NCTC 8325 / PS 47), this protein is Clumping factor A (clfA).